We begin with the raw amino-acid sequence, 259 residues long: MELLAKTRKLNALLQSAAGKPVNFREMSDTMCEVIEANVFVVSRRGKLLGYAIHQQIENERMKQMLAERQFPEEYTQSLFNITETSSNLDVNSAYTAFPVENRELFGQGLTTIVPIVGGGERLGTLVLARLGQEFLDDDLILAEYSSTVVGMEILREKAEEIEEEARSKAVVQMAISSLSYSELEAIEHIFEELNGTEGLLVASKIADRVGITRSVIVNALRKLESAGVIESRSLGMKGTYIKVLNDKFLQELAKLKTN.

A GAF domain region spans residues 1–155 (MELLAKTRKL…SSTVVGMEIL (155 aa)). The H-T-H motif DNA-binding region spans 203–222 (ASKIADRVGITRSVIVNALR). At serine 215 the chain carries Phosphoserine.

Belongs to the CodY family.

It is found in the cytoplasm. In terms of biological role, DNA-binding global transcriptional regulator which is involved in the adaptive response to starvation and acts by directly or indirectly controlling the expression of numerous genes in response to nutrient availability. During rapid exponential growth, CodY is highly active and represses genes whose products allow adaptation to nutrient depletion. In Bacillus cereus (strain B4264), this protein is Global transcriptional regulator CodY.